The sequence spans 544 residues: Putative ankyrin repeat protein L289 (544 aa).

ANK repeat units lie at residues 31 to 71, 72 to 105, 110 to 143, 147 to 181, 185 to 218, 222 to 255, 259 to 297, 300 to 339, 340 to 374, 378 to 413, and 414 to 447; these read KNFS…AQNE, HGWT…DPNI, YSQT…DINH, LGVS…DINS, QGNT…DPNI, KGTT…NINF, YNET…DIPI, DKLS…IQCS, NGKT…NPNI, QGKT…TIDN, and TGQS…CVNK.

The chain is Putative ankyrin repeat protein L289 from Acanthamoeba polyphaga mimivirus (APMV).